Consider the following 1407-residue polypeptide: DNA-directed RNA polymerase subunit beta' (1407 aa).

4 residues coordinate Zn(2+): cysteine 70, cysteine 72, cysteine 85, and cysteine 88. Mg(2+)-binding residues include aspartate 460, aspartate 462, and aspartate 464. Zn(2+) is bound by residues cysteine 814, cysteine 888, cysteine 895, and cysteine 898.

It belongs to the RNA polymerase beta' chain family. As to quaternary structure, the RNAP catalytic core consists of 2 alpha, 1 beta, 1 beta' and 1 omega subunit. When a sigma factor is associated with the core the holoenzyme is formed, which can initiate transcription. Mg(2+) serves as cofactor. It depends on Zn(2+) as a cofactor.

It carries out the reaction RNA(n) + a ribonucleoside 5'-triphosphate = RNA(n+1) + diphosphate. In terms of biological role, DNA-dependent RNA polymerase catalyzes the transcription of DNA into RNA using the four ribonucleoside triphosphates as substrates. The chain is DNA-directed RNA polymerase subunit beta' from Buchnera aphidicola subsp. Acyrthosiphon pisum (strain APS) (Acyrthosiphon pisum symbiotic bacterium).